The following is a 382-amino-acid chain: Na(+)/H(+) antiporter NhaA 2 (382 aa).

10 helical membrane passes run 11 to 31 (FSVP…LDPA), 45 to 65 (LSFH…IAAV), 91 to 111 (LGGV…VGLP), 116 to 136 (GWGI…RMVF), 145 to 165 (YLLL…ALFY), 171 to 191 (PVVA…WGLG), 197 to 214 (SYWP…IGLH), 287 to 307 (WLVL…FGLL), 324 to 344 (LLVA…VSGS), and 353 to 373 (AAAK…MLLG).

This sequence belongs to the NhaA Na(+)/H(+) (TC 2.A.33) antiporter family.

The protein localises to the cell inner membrane. The catalysed reaction is Na(+)(in) + 2 H(+)(out) = Na(+)(out) + 2 H(+)(in). Na(+)/H(+) antiporter that extrudes sodium in exchange for external protons. This Pelobacter propionicus (strain DSM 2379 / NBRC 103807 / OttBd1) protein is Na(+)/H(+) antiporter NhaA 2.